The following is a 525-amino-acid chain: Protein ea59 (525 aa).

The chain is Protein ea59 (ea59) from Escherichia coli (Bacteriophage lambda).